The following is a 996-amino-acid chain: Sarcoplasmic/endoplasmic reticulum calcium ATPase 1 (996 aa).

Over 1-48 (MENAHTKSPAECLSYFGVNEHTGLSPDQFKKNLDKFGYNELPAEEGKS) the chain is Cytoplasmic. Residues 49–69 (IWDLIVEQFEDLLVRILLLAA) form a helical membrane-spanning segment. At 70 to 89 (CISFVLAWFEEGEETITAFV) the chain is on the lumenal side. Residues 90-110 (EPFVILLILIANAIVGVWQER) form a helical membrane-spanning segment. Residues 111–253 (NAEDAIEALK…QEKTPLQAKL (143 aa)) are Cytoplasmic-facing. Residues 254–273 (DEFGEQLSKVISLICVAVWA) form a helical membrane-spanning segment. The Lumenal portion of the chain corresponds to 274 to 295 (INIGHFNDPVHGGSWIRGAVYY). The helical transmembrane segment at 296-313 (FKIAVALAVAAIPEGLPA) threads the bilayer. Ca(2+) is bound by residues valine 304, alanine 305, isoleucine 307, and glutamate 309. Topologically, residues 314–754 (VITTCLALGT…EEGRAIYNNM (441 aa)) are cytoplasmic. The 4-aspartylphosphate intermediate role is filled by aspartate 351. Residues aspartate 351 and threonine 353 each contribute to the Mg(2+) site. Residues threonine 353, glutamate 442, arginine 489, lysine 512, arginine 557, threonine 622, glycine 623, aspartate 624, arginine 675, and lysine 681 each contribute to the ATP site. Aspartate 700 contacts Mg(2+). Asparagine 703 contributes to the ATP binding site. Residues 755–774 (KQFIRYLISSNVGEVVCIFL) traverse the membrane as a helical segment. Ca(2+) contacts are provided by asparagine 765 and glutamate 768. The Lumenal portion of the chain corresponds to 775 to 784 (TAALGLPEAL). A helical transmembrane segment spans residues 785–805 (IPVQLLWVNLVTDGLPATALG). Residues 785-805 (IPVQLLWVNLVTDGLPATALG) form an interaction with PLN region. Ca(2+) is bound by residues asparagine 793, threonine 796, and aspartate 797. The Cytoplasmic portion of the chain corresponds to 806-825 (FNPPDLDIMGKPPRSPKEPL). A helical transmembrane segment spans residues 826–848 (ISGWLFFRYMAIGGYVGAATVGG). Residues 849–894 (AAWWFLYDSTGPAVTYYQLSHFMQCHNHNEDFTGVDCDIFEASPPM) lie on the Lumenal side of the membrane. Residues cysteine 873 and cysteine 885 are joined by a disulfide bond. Residues 895–914 (TMALSVLVTIEMCNALNSLS) form a helical membrane-spanning segment. Ca(2+) is bound at residue glutamate 905. The Cytoplasmic portion of the chain corresponds to 915–927 (ENQSLIRMPPWSN). Residues 928-946 (LWLMAAMTLSMSLHFMIIY) form a helical membrane-spanning segment. An interaction with PLN region spans residues 929–940 (WLMAAMTLSMSL). The Lumenal segment spans residues 947 to 961 (VDPLPMIFKLTHLTF). Residues 962–982 (DQWLMVFKLSFPVILIDEVLK) form a helical membrane-spanning segment. Residues 983–996 (FFARNYIETGKEVK) are Cytoplasmic-facing.

Belongs to the cation transport ATPase (P-type) (TC 3.A.3) family. Type IIA subfamily. Interacts with sarcolipin (SLN). Interacts with phospholamban (PLN). Interacts with myoregulin (MRLN). Interacts with DWORF. It depends on Mg(2+) as a cofactor.

It localises to the endoplasmic reticulum membrane. The protein resides in the sarcoplasmic reticulum membrane. The enzyme catalyses Ca(2+)(in) + ATP + H2O = Ca(2+)(out) + ADP + phosphate + H(+). Inhibited by sarcolipin (SLN) and myoregulin (MRLN). Also shown to be inhibited by phospholamban (PLN) in vitro. Enhanced by DWORF; DWORF increases activity by displacing sarcolipin (SLN), phospholamban (PLN) and myoregulin (MRLN). In terms of biological role, key regulator of striated muscle performance by acting as the major Ca(2+) ATPase responsible for the reuptake of cytosolic Ca(2+) into the sarcoplasmic reticulum. Catalyzes the hydrolysis of ATP coupled with the translocation of calcium from the cytosol to the sarcoplasmic reticulum lumen. Contributes to calcium sequestration involved in muscular excitation/contraction. The chain is Sarcoplasmic/endoplasmic reticulum calcium ATPase 1 (atp2a1) from Makaira nigricans (Atlantic blue marlin).